Reading from the N-terminus, the 596-residue chain is uncharacterized protein (596 aa).

The segment at 1–31 (MSTSNDPVVSSHDPIKQEKEQETDLEAQVEH) is disordered. Topologically, residues 1-37 (MSTSNDPVVSSHDPIKQEKEQETDLEAQVEHKKRNER) are cytoplasmic. A compositionally biased stretch (basic and acidic residues) spans 13 to 22 (DPIKQEKEQE). Residues 38-58 (GNAFVGFLILIFVYYLLRGGS) traverse the membrane as a helical segment. Residues 59–596 (NDNDKQEMSH…ILVSDSGEEA (538 aa)) lie on the Lumenal side of the membrane. The N-linked (GlcNAc...) asparagine glycan is linked to asparagine 118. Histidine 197 is a Zn(2+) binding site. Residue aspartate 199 is part of the active site. Aspartate 232 contributes to the Zn(2+) binding site. The active-site Proton acceptor is glutamate 266. 2 residues coordinate Zn(2+): glutamate 267 and aspartate 295. 3 N-linked (GlcNAc...) asparagine glycosylation sites follow: asparagine 466, asparagine 541, and asparagine 555. Position 565 (histidine 565) interacts with Zn(2+).

This sequence belongs to the peptidase M20A family. Zn(2+) serves as cofactor.

Its subcellular location is the vacuole membrane. This is an uncharacterized protein from Schizosaccharomyces pombe (strain 972 / ATCC 24843) (Fission yeast).